The following is a 750-amino-acid chain: Glutathione biosynthesis bifunctional protein GshAB (750 aa).

Residues 1–333 (MIIDRLLQRS…EANRLNDLIA (333 aa)) are glutamate--cysteine ligase. A disordered region spans residues 32 to 51 (QPTQRVAQTPHPKTLGSRNY). Residues 489–747 (KKILDEKHFP…ITPRILAKLF (259 aa)) form the ATP-grasp domain. Residue 516 to 574 (SQIQDKPIVVKPKSTNFGLGISIFKTSANLASYEKAIDIAFTEDSAILVEEYIEGTEYR) coordinates ATP. Mg(2+)-binding residues include aspartate 696, glutamate 717, and asparagine 719. 3 residues coordinate Mn(2+): aspartate 696, glutamate 717, and asparagine 719.

The protein in the N-terminal section; belongs to the glutamate--cysteine ligase type 1 family. Type 2 subfamily. As to quaternary structure, monomer. Mg(2+) serves as cofactor. Requires Mn(2+) as cofactor.

The enzyme catalyses L-cysteine + L-glutamate + ATP = gamma-L-glutamyl-L-cysteine + ADP + phosphate + H(+). It catalyses the reaction gamma-L-glutamyl-L-cysteine + glycine + ATP = glutathione + ADP + phosphate + H(+). The protein operates within sulfur metabolism; glutathione biosynthesis; glutathione from L-cysteine and L-glutamate: step 1/2. Its pathway is sulfur metabolism; glutathione biosynthesis; glutathione from L-cysteine and L-glutamate: step 2/2. In terms of biological role, synthesizes glutathione from L-glutamate and L-cysteine via gamma-L-glutamyl-L-cysteine. This chain is Glutathione biosynthesis bifunctional protein GshAB, found in Streptococcus agalactiae serotype III (strain NEM316).